We begin with the raw amino-acid sequence, 966 residues long: LRR receptor-like serine/threonine-protein kinase ERL1 (966 aa).

A signal peptide spans 1–25; sequence MKEKMQRMVLSLAMVGFMVFGVASA. Residues 26–582 are Extracellular-facing; it reads MNNEGKALMA…PLPKSRVFSR (557 aa). Residues 40-63 form an LRR 1 repeat; the sequence is FSNLVNMLLDWDDVHNSDLCSWRG. 2 N-linked (GlcNAc...) asparagine glycosylation sites follow: Asn68 and Asn77. LRR repeat units lie at residues 75 to 94, 95 to 118, 120 to 142, 143 to 166, 168 to 190, 192 to 214, 215 to 238, 239 to 261, 262 to 285, 286 to 311, 313 to 333, 334 to 357, 359 to 381, 383 to 404, 405 to 429, 431 to 453, 454 to 476, 478 to 500, 501 to 525, and 527 to 550; these read SLNL…IGDL, RNLQ…IGNC, SLVY…ISKL, KQLE…LTQI, NLKR…LYWN, VLQY…MCQL, TGLW…IGNC, TSFQ…NIGF, LQVA…IGLM, QALA…NLSF, GKLY…LGNM, SRLS…LGKL, QLFE…ISSC, ALNQ…AFRN, LGSL…LGHI, NLDK…LGDL, EHLL…EFGN, RSIQ…ELGQ, LQNL…LTNC, and TLVN…NFSR. Residues Asn226 and Asn237 are each glycosylated (N-linked (GlcNAc...) asparagine). N-linked (GlcNAc...) asparagine glycans are attached at residues Asn308 and Asn332. A glycan (N-linked (GlcNAc...) asparagine) is linked at Asn377. 3 N-linked (GlcNAc...) asparagine glycosylation sites follow: Asn412, Asn441, and Asn460. Residues Asn532, Asn537, and Asn547 are each glycosylated (N-linked (GlcNAc...) asparagine). Residues 583–603 form a helical membrane-spanning segment; the sequence is GALICIVLGVITLLCMIFLAV. Topologically, residues 604–966 are cytoplasmic; that stretch reads YKSMQQKKIL…FREVISKSSI (363 aa). A phosphothreonine mark is found at Thr637 and Thr645. Positions 648–921 constitute a Protein kinase domain; it reads LNEKFIIGYG…RVLLSLVPSL (274 aa). ATP-binding positions include 654–662 and Lys676; that span reads IGYGASSTV. Phosphotyrosine is present on residues Tyr721 and Tyr760. Asp773 (proton acceptor) is an active-site residue. Tyr815 carries the post-translational modification Phosphotyrosine. Position 823 is a phosphothreonine (Thr823).

Belongs to the protein kinase superfamily. Ser/Thr protein kinase family. In terms of assembly, homodimer and heterodimer with ERECTA and TMM. Interacts with EPF1 and EPF2. Interacts with SERK1, SERK2, SERK3/BAK1 and SERK4 in a EPF1-induced manner. Mostly expressed in developing organs, including bud clusters, flowers, siliques and young rosettes. Also detected in mature aboveground organs, such as leaves, stems and pedicels, but barely in roots.

Its subcellular location is the cell membrane. It carries out the reaction L-seryl-[protein] + ATP = O-phospho-L-seryl-[protein] + ADP + H(+). The catalysed reaction is L-threonyl-[protein] + ATP = O-phospho-L-threonyl-[protein] + ADP + H(+). Receptor kinase that regulates inflorescence architecture and organ shape as well as stomatal patterning, including density and clustering, together with ER and ERL2. Redundantly involved with ER in procambial development regulation. Forms a functional ligand-receptor pair with EPF1 (AC Q8S8I4). Forms a constitutive complex with TMM involved in the recognition of the stomatal regulatory peptides EPF1, EPF2 and EPFL9/STOMAGEN. This is LRR receptor-like serine/threonine-protein kinase ERL1 from Arabidopsis thaliana (Mouse-ear cress).